The chain runs to 211 residues: Large ribosomal subunit protein uL3 (211 aa).

The segment at 135 to 155 (THGNSLSHRAPGSIGQNQSPG) is disordered. At Gln152 the chain carries N5-methylglutamine.

Belongs to the universal ribosomal protein uL3 family. Part of the 50S ribosomal subunit. Forms a cluster with proteins L14 and L19. Methylated by PrmB.

In terms of biological role, one of the primary rRNA binding proteins, it binds directly near the 3'-end of the 23S rRNA, where it nucleates assembly of the 50S subunit. This Pseudoalteromonas translucida (strain TAC 125) protein is Large ribosomal subunit protein uL3.